Reading from the N-terminus, the 510-residue chain is Chromosomal replication initiator protein DnaA (510 aa).

Positions Met-1–Asp-107 are domain I, interacts with DnaA modulators. The interval Asp-107–Thr-169 is domain II. The disordered stretch occupies residues Pro-119–Gly-168. A domain III, AAA+ region region spans residues Ser-170–Ala-386. ATP is bound by residues Gly-214, Gly-216, Lys-217, and Thr-218. The segment at Ser-387 to Arg-510 is domain IV, binds dsDNA.

The protein belongs to the DnaA family. As to quaternary structure, oligomerizes as a right-handed, spiral filament on DNA at oriC.

It is found in the cytoplasm. Functionally, plays an essential role in the initiation and regulation of chromosomal replication. ATP-DnaA binds to the origin of replication (oriC) to initiate formation of the DNA replication initiation complex once per cell cycle. Binds the DnaA box (a 9 base pair repeat at the origin) and separates the double-stranded (ds)DNA. Forms a right-handed helical filament on oriC DNA; dsDNA binds to the exterior of the filament while single-stranded (ss)DNA is stabiized in the filament's interior. The ATP-DnaA-oriC complex binds and stabilizes one strand of the AT-rich DNA unwinding element (DUE), permitting loading of DNA polymerase. After initiation quickly degrades to an ADP-DnaA complex that is not apt for DNA replication. Binds acidic phospholipids. This chain is Chromosomal replication initiator protein DnaA, found in Mycobacterium marinum (strain ATCC BAA-535 / M).